The sequence spans 128 residues: MLALLRPYLSTRVLCVLVVCFSALMLVAFIPTLFRNDTALQIRASRQGTTLPDGFYVYQRLNAEGIRIKSITPDNDSLVIRFDTEEQSMAAEKVLHQLLPYGFDIGQMDPSGSSQLMNRLSLRKQSVG.

Over 1–13 (MLALLRPYLSTRV) the chain is Cytoplasmic. The chain crosses the membrane as a helical span at residues 14-34 (LCVLVVCFSALMLVAFIPTLF). The Periplasmic segment spans residues 35–128 (RNDTALQIRA…RLSLRKQSVG (94 aa)).

It belongs to the MzrA family. As to quaternary structure, interacts with EnvZ.

It is found in the cell inner membrane. In terms of biological role, modulates the activity of the EnvZ/OmpR two-component regulatory system, probably by directly modulating EnvZ enzymatic activity and increasing stability of phosphorylated OmpR. This Erwinia billingiae (strain Eb661) protein is Modulator protein MzrA.